Reading from the N-terminus, the 708-residue chain is MADREGGCAAGRGRELEPELEPGPGPGSALEPGEEFEIVDRSQLPGPGDLRSATRPRAAEGWSAPILTLARRATGNLSASCGSALRAAAGLGGGDSGDGTARAASKCQMMEERANLMHMMKLSIKVLLQSALSLGRSLDADHAPLQQFFVVMEHCLKHGLKVKKSFIGQNKSFFGPLELVEKLCPEASDIATSVRNLPELKTAVGRGRAWLYLALMQKKLADYLKVLIDNKHLLSEFYEPEALMMEEEGMVIVGLLVGLNVLDANLCLKGEDLDSQVGVIDFSLYLKDVQDLDGGKEHERITDVLDQKNYVEELNRHLSCTVGDLQTKIDGLEKTNSKLQEELSAATDRICSLQEEQQQLREQNELIRERSEKSVEITKQDTKVELETYKQTRQGLDEMYSDVWKQLKEEKKVRLELEKELELQIGMKTEMEIAMKLLEKDTHEKQDTLVALRQQLEEVKAINLQMFHKAQNAESSLQQKNEAITSFEGKTNQVMSSMKQMEERLQHSERARQGAEERSHKLQQELGGRIGALQLQLSQLHEQCSSLEKELKSEKEQRQALQRELQHEKDTSSLLRMELQQVEGLKKELRELQDEKAELQKICEEQEQALQEMGLHLSQSKLKMEDIKEVNQALKGHAWLKDDEATHCRQCEKEFSISRRKHHCRNCGHIFCNTCSSNELALPSYPKPVRVCDSCHTLLLQRCSSTAS.

Residues 1 to 17 (MADREGGCAAGRGRELE) are compositionally biased toward basic and acidic residues. The segment at 1-57 (MADREGGCAAGRGRELEPELEPGPGPGSALEPGEEFEIVDRSQLPGPGDLRSATRPR) is disordered. Residues 139 to 271 (DADHAPLQQF…LDANLCLKGE (133 aa)) enclose the RUN domain. Residues 321 to 374 (TVGDLQTKIDGLEKTNSKLQEELSAATDRICSLQEEQQQLREQNELIRERSEKS) adopt a coiled-coil conformation. 2 positions are modified to phosphotyrosine: Y389 and Y400. Residues 405-617 (KQLKEEKKVR…QALQEMGLHL (213 aa)) are a coiled coil. The disordered stretch occupies residues 493–522 (QVMSSMKQMEERLQHSERARQGAEERSHKL). The span at 500–522 (QMEERLQHSERARQGAEERSHKL) shows a compositional bias: basic and acidic residues. Positions 615 to 625 (LHLSQSKLKME) are interaction with RAB4. A Phosphoserine modification is found at S620. The FYVE-type zinc finger occupies 642-700 (DDEATHCRQCEKEFSISRRKHHCRNCGHIFCNTCSSNELALPSYPKPVRVCDSCHTLLL). Zn(2+)-binding residues include C648, C651, C664, C667, C672, C675, C692, and C695.

As to quaternary structure, self-assembles through coiled coil domains to drive ELVA (endo-lysosomal vesicular assembly) formation. Interacts with BMX. May interact with SSB. Interacts with RAB4 and RAB5 that have been activated by GTP-binding. Interacts WITH RAB14 and RAB4B (GTP-bound form); the interactions allow endosomal tethering and fusion. Interacts with ARL8B (GTP-bound form); the interaction is required for RUFY1 endosomal location and promotes interaction with RAB14. In terms of processing, phosphorylation on Tyr-389 and/or Tyr-400 is required for interaction with BMX and endosomal targeting. Broadly expressed, with highest levels in lung, testis, kidney and brain.

The protein resides in the early endosome membrane. Functionally, activating adapter involved in cargo sorting from early/recycling endosomes. Regulates retrieval of proteins from endosomes to the trans-Golgi network through interaction with the dynein-dynactin complex. Dual effector of RAB4B and RAB14, mediates a cooperative interaction allowing endosomal tethering and fusion. Binds phospholipid vesicles containing phosphatidylinositol 3-phosphate and participates in early endosomal trafficking. In oocytes, self-assembles to form a protein matrix which hold together endolysosomes, autophagosomes and proteasomes and generate non-membrane-bound compartments called endo-lysosomal vesicular assemblies (ELVAs). In immature oocytes, ELVAs sequester ubiquitinated protein aggregates and degrade them upon oocyte maturation. The sequence is that of RUN and FYVE domain-containing protein 1 from Homo sapiens (Human).